A 480-amino-acid chain; its full sequence is Sestrin-2 (480 aa).

At Met-1 the chain carries N-acetylmethionine. A disordered region spans residues 20 to 43; sequence RGGVAGPETREEHREGQARRGSRG. Basic and acidic residues predominate over residues 27–37; that stretch reads ETREEHREGQA. The interval 66–239 is N-terminal domain; mediates the alkylhydroperoxide reductase activity; sequence GLEALMSSGR…APSPPSEQGT (174 aa). Cys-125 (cysteine sulfenic acid (-SOH) intermediate) is an active-site residue. Lys-175 participates in a covalent cross-link: Glycyl lysine isopeptide (Lys-Gly) (interchain with G-Cter in ubiquitin). Disordered stretches follow at residues 221–251 and 272–291; these read DAEGSPASQAPSPPSEQGTPPSGDPLNNSGG and LLRDEGASQEEMENRFELEK. The span at 223-238 shows a compositional bias: low complexity; the sequence is EGSPASQAPSPPSEQG. Ser-249 is modified (phosphoserine). The interval 308–480 is C-terminal domain; mediates TORC1 regulation; that stretch reads PHPDILCFVE…ALRAITRYMT (173 aa). L-leucine contacts are provided by residues 374-377, Thr-386, and Glu-451; that span reads TYNT.

Belongs to the sestrin family. In terms of assembly, interacts with the GATOR2 complex which is composed of MIOS, SEC13, SEH1L, WDR24 and WDR59; the interaction is negatively regulated by leucine. Conveys leucine availability via direct interaction with SEH1L and WDR24 components of the GATOR2 complex. Interacts with RRAGA, RRAGB, RRAGC and RRAGD; may function as a guanine nucleotide dissociation inhibitor for RRAGs and regulate them. May interact with the TORC2 complex. Interacts with KEAP1, RBX1, SQSTM and ULK1; to regulate the degradation of KEAP1. May also associate with the complex composed of TSC1, TSC2 and the AMP-responsive protein kinase/AMPK to regulate TORC1 signaling. May interact with PRDX1. Post-translationally, phosphorylated by ULK1 at multiple sites. In terms of processing, ubiquitinated at Lys-175 by RNF167 via 'Lys-63'-linked polyubiquitination in response to leucine deprivation: ubiquitination promotes SESN2-interaction with the GATOR2 complex, leading to inhibit the TORC1 signaling pathway. Deubiquitinated at Lys-175 by STAMBPL1, promoting the TORC1 signaling pathway. Ubiquitinated by RNF186; ubiquitination mediates proteasomal degradation. In terms of tissue distribution, detected in heart, liver and skeletal muscles (at protein level).

It localises to the cytoplasm. It catalyses the reaction a hydroperoxide + L-cysteinyl-[protein] = S-hydroxy-L-cysteinyl-[protein] + an alcohol. In terms of biological role, functions as an intracellular leucine sensor that negatively regulates the mTORC1 signaling pathway through the GATOR complex. In absence of leucine, binds the GATOR subcomplex GATOR2 and prevents mTORC1 signaling. Binding of leucine to SESN2 disrupts its interaction with GATOR2 thereby activating the TORC1 signaling pathway. This stress-inducible metabolic regulator also plays a role in protection against oxidative and genotoxic stresses. May negatively regulate protein translation in response to endoplasmic reticulum stress, via mTORC1. May positively regulate the transcription by NFE2L2 of genes involved in the response to oxidative stress by facilitating the SQSTM1-mediated autophagic degradation of KEAP1. May also mediate TP53 inhibition of TORC1 signaling upon genotoxic stress. Moreover, may prevent the accumulation of reactive oxygen species (ROS) through the alkylhydroperoxide reductase activity born by the N-terminal domain of the protein. Was originally reported to contribute to oxidative stress resistance by reducing PRDX1. However, this could not be confirmed. The protein is Sestrin-2 of Mus musculus (Mouse).